Here is a 125-residue protein sequence, read N- to C-terminus: Small ribosomal subunit protein uS13 (125 aa).

The segment at 97–125 (PVRGQKTRSNARTRKGPRPSRIKTKKKSS) is disordered. A compositionally biased stretch (basic residues) spans 101–125 (QKTRSNARTRKGPRPSRIKTKKKSS).

Belongs to the universal ribosomal protein uS13 family. In terms of assembly, part of the 30S ribosomal subunit. Forms a loose heterodimer with protein S19. Forms two bridges to the 50S subunit in the 70S ribosome.

Located at the top of the head of the 30S subunit, it contacts several helices of the 16S rRNA. In the 70S ribosome it contacts the 23S rRNA (bridge B1a) and protein L5 of the 50S subunit (bridge B1b), connecting the 2 subunits; these bridges are implicated in subunit movement. Contacts the tRNAs in the A and P-sites. This is Small ribosomal subunit protein uS13 from Thermotoga neapolitana (strain ATCC 49049 / DSM 4359 / NBRC 107923 / NS-E).